Here is a 152-residue protein sequence, read N- to C-terminus: Natriuretic peptides A (152 aa).

Positions Met1 to Ala24 are cleaved as a signal peptide. Propeptides lie at residues Asn25–Arg122 and Asp92–Asp102. The interval Asp54–Ser104 is disordered. At Ser128 the chain carries Phosphoserine. Cysteines 129 and 145 form a disulfide. Residues Asn146–Tyr150 form an important for degradation of atrial natriuretic peptide by IDE region.

Belongs to the natriuretic peptide family. Homodimer; disulfide-linked antiparallel dimer. In terms of processing, the precursor molecule is proteolytically cleaved by CORIN at Arg-122 to produce the atrial natriuretic peptide. Undergoes further proteolytic cleavage by unknown proteases to give rise to long-acting natriuretic peptide, vessel dilator and kaliuretic peptide. Additional processing gives rise to the auriculin and atriopeptin peptides. In the kidneys, alternative processing by an unknown protease results in the peptide urodilatin. Post-translationally, cleavage by MME initiates degradation of the factor and thereby regulates its activity. Degradation by IDE results in reduced activation of NPR1 (in vitro). During IDE degradation, the resulting products can temporarily stimulate NPR2 to produce cGMP, before the fragments are completely degraded and inactivated by IDE (in vitro). Degraded by IDE. In terms of processing, phosphorylation on Ser-128 decreases vasorelaxant activity. High levels of expression in the atria compared to the ventricles. Very low levels of expression detected in extracardiac tissues such as the brain, hypothalamus, pituitary, lung and aorta. In terms of tissue distribution, atria (at protein level). As to expression, high levels of expression in the atria with very low levels of expression in the ventricles (at protein level). Relatively low levels of expression detected in the brain compared to the atria (at protein level).

Its subcellular location is the secreted. The protein localises to the perikaryon. The protein resides in the cell projection. In terms of biological role, hormone that plays a key role in mediating cardio-renal homeostasis, and is involved in vascular remodeling and regulating energy metabolism. Acts by specifically binding and stimulating NPR1 to produce cGMP, which in turn activates effector proteins, such as PRKG1, that drive various biological responses. Regulates vasodilation, natriuresis, diuresis and aldosterone synthesis and is therefore essential for regulating blood pressure, controlling the extracellular fluid volume and maintaining the fluid-electrolyte balance. Also involved in inhibiting cardiac remodeling and cardiac hypertrophy by inducing cardiomyocyte apoptosis and attenuating the growth of cardiomyocytes and fibroblasts. Plays a role in female pregnancy by promoting trophoblast invasion and spiral artery remodeling in uterus, and thus prevents pregnancy-induced hypertension. In adipose tissue, acts in various cGMP- and PKG-dependent pathways to regulate lipid metabolism and energy homeostasis. This includes up-regulating lipid metabolism and mitochondrial oxygen utilization by activating the AMP-activated protein kinase (AMPK), and increasing energy expenditure by acting via MAPK11 to promote the UCP1-dependent thermogenesis of brown adipose tissue. Binds the clearance receptor NPR3 which removes the hormone from circulation. Its function is as follows. May have a role in cardio-renal homeostasis through regulation of natriuresis, diuresis, vasodilation, and inhibiting aldosterone synthesis. In vitro, promotes the production of cGMP and induces vasodilation. May promote natriuresis, at least in part, by enhancing prostaglandin E2 synthesis resulting in the inhibition of renal Na+-K+-ATPase. However reports on the involvement of this peptide in mammal blood volume and blood pressure homeostasis are conflicting; according to a report, in vivo it is not sufficient to activate cGMP and does not inhibit collecting duct transport nor effect diuresis and natriuresis. Appears to bind to specific receptors that are distinct from the receptors bound by atrial natriuretic peptide and vessel dilator. Possibly enhances protein excretion in urine by decreasing proximal tubular protein reabsorption. May have a role in cardio-renal homeostasis through regulation of natriuresis, diuresis, and vasodilation. In vitro, promotes the production of cGMP and induces vasodilation. May promote natriuresis, at least in part, by enhancing prostaglandin E2 synthesis resulting in the inhibition of renal Na+-K+-ATPase. However reports on the involvement of this peptide in mammal blood volume and blood pressure homeostasis are conflicting; according to a report, in vivo it is not sufficient to activate cGMP and does not inhibit collecting duct transport nor effect diuresis and natriuresis. Appears to bind to specific receptors that are distinct from the receptors bound by the atrial natriuretic and long-acting natriuretic peptides. Possibly functions in protein excretion in urine by maintaining the integrity of the proximal tubules and enhancing protein excretion by decreasing proximal tubular protein reabsorption. Functionally, may have a role in cardio-renal homeostasis through regulation of diuresis and inhibiting aldosterone synthesis. In vitro, promotes the production of cGMP and induces vasodilation. May promote natriuresis, at least in part, by enhancing prostaglandin E2 synthesis resulting in the inhibition of renal Na+-K+-ATPase. May have a role in potassium excretion but not sodium excretion (natriuresis). Possibly enhances protein excretion in urine by decreasing proximal tubular protein reabsorption. In terms of biological role, hormone produced in the kidneys that appears to be important for maintaining cardio-renal homeostasis. Mediates vasodilation, natriuresis and diuresis primarily in the renal system, in order to maintain the extracellular fluid volume and control the fluid-electrolyte balance. Specifically binds and stimulates cGMP production by renal transmembrane receptors, likely NPR1. Urodilatin not ANP, may be the natriuretic peptide responsible for the regulation of sodium and water homeostasis in the kidney. Its function is as follows. May have a role in cardio-renal homeostasis through regulation of natriuresis and vasodilation. In vivo promotes natriuresis and in vitro, vasodilates renal artery strips. May have a role in cardio-renal homeostasis through regulation of regulation of natriuresis and vasodilation. In vivo promotes natriuresis. In vitro, vasodilates intestinal smooth muscle but not smooth muscle strips. Functionally, may have a role in cardio-renal homeostasis through regulation of natriuresis and vasodilation. In vivo promotes natriuresis. In vitro, selectively vasodilates intestinal and vascular smooth muscle strips. In terms of biological role, may have a role in cardio-renal homeostasis through regulation of natriuresis and vasodilation. In vivo promotes natriuresis. In vitro, selectively vasodilates intestinal smooth muscle but not vascular smooth muscle strips. This Rattus norvegicus (Rat) protein is Natriuretic peptides A (Nppa).